The following is a 492-amino-acid chain: Probable glycogen synthase 2 (492 aa).

An ADP-alpha-D-glucose-binding site is contributed by Lys-15.

The protein belongs to the glycosyltransferase 1 family. Bacterial/plant glycogen synthase subfamily.

The catalysed reaction is [(1-&gt;4)-alpha-D-glucosyl](n) + ADP-alpha-D-glucose = [(1-&gt;4)-alpha-D-glucosyl](n+1) + ADP + H(+). It functions in the pathway glycan biosynthesis; glycogen biosynthesis. Its function is as follows. Synthesizes alpha-1,4-glucan chains using ADP-glucose. The polypeptide is Probable glycogen synthase 2 (glgA2) (Nostoc sp. (strain PCC 7120 / SAG 25.82 / UTEX 2576)).